Here is a 487-residue protein sequence, read N- to C-terminus: Schwannomin-interacting protein 1 (487 aa).

Disordered regions lie at residues 1–74 (MERS…VSAL), 88–221 (VIDE…PVPP), 236–260 (FREQ…NERE), and 308–354 (SGSD…SLDD). Positions 14-27 (DQGKHSDSDYREDG) are enriched in basic and acidic residues. Residues 32–67 (SDAGSSSSSSRASSQSNSTKVTPCSECKSSSSPGGS) are compositionally biased toward low complexity. Acidic residues predominate over residues 92–106 (WAPEEDGEEEEEEDE). 2 stretches are compositionally biased toward basic and acidic residues: residues 107–123 (RDQR…REPG) and 153–162 (HQHDPQDLRH). Ser-117 carries the phosphoserine modification. The segment covering 242 to 255 (RNQGQARTNSTSAQ) has biased composition (polar residues). Positions 309-323 (GSDKDSDADDSKTET) are enriched in basic and acidic residues. Residues 324 to 335 (SLDTPLSPMSKQ) are compositionally biased toward polar residues. The segment covering 344–354 (TTEEESESLDD) has biased composition (acidic residues). Residues 424 to 458 (IGQLQVIVNDLHSQIESLNEELVQLLLIRDELHTE) are a coiled coil.

It belongs to the SCHIP1 family. As to quaternary structure, homooligomer (via coiled coil domain). Interacts with NF2; the interaction is direct. Interacts with ANK3. Preferentially expressed in brain, skeletal muscles and heart. Also expressed in detected in pancreas, kidney, liver, lung, and placenta.

It is found in the cytoplasm. The sequence is that of Schwannomin-interacting protein 1 from Homo sapiens (Human).